The following is a 596-amino-acid chain: UvrABC system protein C (596 aa).

Residues 16–95 (SSPGVYRFYS…IKENKPKYNV (80 aa)) enclose the GIY-YIG domain. The region spanning 209 to 244 (SSVKKYYQEKMLSAAEDMQFEKAQFFKERYNSVLGL) is the UVR domain.

It belongs to the UvrC family. As to quaternary structure, interacts with UvrB in an incision complex.

The protein localises to the cytoplasm. Its function is as follows. The UvrABC repair system catalyzes the recognition and processing of DNA lesions. UvrC both incises the 5' and 3' sides of the lesion. The N-terminal half is responsible for the 3' incision and the C-terminal half is responsible for the 5' incision. This is UvrABC system protein C from Cytophaga hutchinsonii (strain ATCC 33406 / DSM 1761 / CIP 103989 / NBRC 15051 / NCIMB 9469 / D465).